A 672-amino-acid polypeptide reads, in one-letter code: UvrABC system protein B (672 aa).

The region spanning 26–181 (AGLEDGLAYQ…ILQRLAELQY (156 aa)) is the Helicase ATP-binding domain. Position 39–46 (39–46 (GVTGSGKT)) interacts with ATP. The Beta-hairpin motif lies at 92–115 (YYDYYQPEAYVPSSDTYIEKDASI). One can recognise a Helicase C-terminal domain in the interval 430-592 (QVDDLLSEIK…ITPKSIQKAV (163 aa)). The UVR domain occupies 631-666 (AKELRKLEEQMYHHARNLEFEEAAAVRDKIQHIRKG).

The protein belongs to the UvrB family. As to quaternary structure, forms a heterotetramer with UvrA during the search for lesions. Interacts with UvrC in an incision complex.

The protein resides in the cytoplasm. Its function is as follows. The UvrABC repair system catalyzes the recognition and processing of DNA lesions. A damage recognition complex composed of 2 UvrA and 2 UvrB subunits scans DNA for abnormalities. Upon binding of the UvrA(2)B(2) complex to a putative damaged site, the DNA wraps around one UvrB monomer. DNA wrap is dependent on ATP binding by UvrB and probably causes local melting of the DNA helix, facilitating insertion of UvrB beta-hairpin between the DNA strands. Then UvrB probes one DNA strand for the presence of a lesion. If a lesion is found the UvrA subunits dissociate and the UvrB-DNA preincision complex is formed. This complex is subsequently bound by UvrC and the second UvrB is released. If no lesion is found, the DNA wraps around the other UvrB subunit that will check the other stand for damage. In Coxiella burnetii (strain Dugway 5J108-111), this protein is UvrABC system protein B.